A 218-amino-acid chain; its full sequence is Major NAD(P)H-flavin oxidoreductase (218 aa).

Residues 12-16 (RYTSK) and Asn73 each bind FMN. 154–159 (LARLNI) provides a ligand contact to NAD(+). FMN is bound by residues 165–166 (EG) and 206–208 (KSR).

Belongs to the nitroreductase family. Homodimer. FMN serves as cofactor.

In terms of biological role, involved in bioluminescence. It is a good supplier of reduced flavin mononucleotide (FMNH2) to the bioluminescence reaction. Major FMN reductase. It is capable of using both NADH and NADPH as electron donors. As electron acceptor, FMN is the most effective, FAD is considerably effective, and riboflavin is the least effective. This is Major NAD(P)H-flavin oxidoreductase from Aliivibrio fischeri (Vibrio fischeri).